A 410-amino-acid polypeptide reads, in one-letter code: 2-oxoglutarate-dependent dioxygenase AOP3 (410 aa).

Residues glycine 258–proline 355 enclose the Fe2OG dioxygenase domain. Fe cation-binding residues include histidine 278, aspartate 280, and histidine 335. Arginine 346 contributes to the 2-oxoglutarate binding site.

Belongs to the iron/ascorbate-dependent oxidoreductase family. Fe(2+) is required as a cofactor.

2-oxoglutarate-dependent dioxygenase involved in glucosinolates biosynthesis. Catalyzes the conversion of methylsulfinylalkyl glucosinolates to hydroxyalkyl glucosinolates. The sequence is that of 2-oxoglutarate-dependent dioxygenase AOP3 (AOP3) from Arabidopsis thaliana (Mouse-ear cress).